We begin with the raw amino-acid sequence, 319 residues long: L-lactate dehydrogenase 2 (319 aa).

Residues valine 16, aspartate 37, lysine 42, tyrosine 68, and 82–83 (GA) each bind NAD(+). The substrate site is built by glutamine 85 and arginine 91. Residues serine 104, 121–123 (AAN), and serine 146 each bind NAD(+). 123-126 (NPVD) provides a ligand contact to substrate. A substrate-binding site is contributed by 151–154 (DSAR). Histidine 178 functions as the Proton acceptor in the catalytic mechanism. Phosphotyrosine is present on tyrosine 222. Threonine 231 is a binding site for substrate.

This sequence belongs to the LDH/MDH superfamily. LDH family. Homotetramer.

Its subcellular location is the cytoplasm. It catalyses the reaction (S)-lactate + NAD(+) = pyruvate + NADH + H(+). Its pathway is fermentation; pyruvate fermentation to lactate; (S)-lactate from pyruvate: step 1/1. Functionally, catalyzes the conversion of lactate to pyruvate (Potential). Contributes to S.aureus growth during nitrosative stress in both aerobically and anaerobically cultured cells, despite playing a secondary role in this resistance mechanism. This Staphylococcus aureus (strain USA300) protein is L-lactate dehydrogenase 2.